Reading from the N-terminus, the 232-residue chain is Glycerol-3-phosphate acyltransferase (232 aa).

6 consecutive transmembrane segments (helical) span residues 4–24 (FLAI…IIAG), 56–76 (VVTL…VGFF), 90–110 (IALS…TVFA), 124–144 (MLIG…LLAV), 152–172 (VGSI…KYVF), and 191–211 (SLDY…IYTH).

It belongs to the PlsY family. In terms of assembly, probably interacts with PlsX.

It localises to the cell inner membrane. It carries out the reaction an acyl phosphate + sn-glycerol 3-phosphate = a 1-acyl-sn-glycero-3-phosphate + phosphate. It functions in the pathway lipid metabolism; phospholipid metabolism. Functionally, catalyzes the transfer of an acyl group from acyl-phosphate (acyl-PO(4)) to glycerol-3-phosphate (G3P) to form lysophosphatidic acid (LPA). This enzyme utilizes acyl-phosphate as fatty acyl donor, but not acyl-CoA or acyl-ACP. This chain is Glycerol-3-phosphate acyltransferase, found in Chlorobaculum tepidum (strain ATCC 49652 / DSM 12025 / NBRC 103806 / TLS) (Chlorobium tepidum).